The primary structure comprises 58 residues: UPF0391 membrane protein Gbem_0127 (58 aa).

2 helical membrane-spanning segments follow: residues 4–24 (WALI…GGIA) and 33–53 (ILFY…LLAG).

Belongs to the UPF0391 family.

It is found in the cell membrane. The chain is UPF0391 membrane protein Gbem_0127 from Citrifermentans bemidjiense (strain ATCC BAA-1014 / DSM 16622 / JCM 12645 / Bem) (Geobacter bemidjiensis).